The primary structure comprises 176 residues: Inner membrane-spanning protein YciB (176 aa).

6 consecutive transmembrane segments (helical) span residues 3 to 23 (FLFD…WGIF), 24 to 44 (TATA…AFRH), 49 to 69 (TMLW…LVLH), 81 to 101 (LYWL…NNLI), 121 to 141 (VAWA…VHNF), and 149 to 169 (FKLF…SLWL).

The protein belongs to the YciB family.

The protein resides in the cell inner membrane. Plays a role in cell envelope biogenesis, maintenance of cell envelope integrity and membrane homeostasis. This chain is Inner membrane-spanning protein YciB, found in Burkholderia vietnamiensis (strain G4 / LMG 22486) (Burkholderia cepacia (strain R1808)).